Reading from the N-terminus, the 496-residue chain is Alanine aminotransferase 1 (496 aa).

A2 bears the N-acetylalanine mark. The residue at position 22 (T22) is a Phosphothreonine. At K314 the chain carries N6-(pyridoxal phosphate)lysine.

This sequence belongs to the class-I pyridoxal-phosphate-dependent aminotransferase family. Alanine aminotransferase subfamily. In terms of assembly, homodimer. Pyridoxal 5'-phosphate serves as cofactor. As to expression, liver, heart, skeletal muscle, etc.

It is found in the cytoplasm. It catalyses the reaction L-alanine + 2-oxoglutarate = pyruvate + L-glutamate. It participates in amino-acid degradation; L-alanine degradation via transaminase pathway; pyruvate from L-alanine: step 1/1. Its function is as follows. Catalyzes the reversible transamination between alanine and 2-oxoglutarate to form pyruvate and glutamate. Participates in cellular nitrogen metabolism and also in liver gluconeogenesis starting with precursors transported from skeletal muscles. The sequence is that of Alanine aminotransferase 1 (Gpt) from Rattus norvegicus (Rat).